A 401-amino-acid chain; its full sequence is Short chain dehydrogenase/reductase dpchH (401 aa).

Asn-16 carries N-linked (GlcNAc...) asparagine glycosylation. A helical membrane pass occupies residues Val-51 to Leu-71. Residues Lys-72 to Asp-80, Thr-99 to Gly-100, and Ala-118 to Val-120 contribute to the NAD(+) site. Asn-242 carries an N-linked (GlcNAc...) asparagine glycan. Tyr-275 acts as the Proton acceptor in catalysis. NAD(+)-binding positions include Tyr-275–Lys-279 and Gly-308–Ile-310. Asn-386 carries N-linked (GlcNAc...) asparagine glycosylation.

The protein resides in the membrane. It participates in secondary metabolite biosynthesis; terpenoid biosynthesis. Functionally, short chain dehydrogenase/reductase; part of the gene cluster that mediates the biosynthesis of the diterpenoid pyrones higginsianins A and B. The first step of the pathway is the synthesis of the alpha-pyrone moiety by the polyketide synthase dpchA via condensation of one acetyl-CoA starter unit with 3 malonyl-CoA units and 2 methylations. The alpha-pyrone is then combined with geranylgeranyl pyrophosphate (GGPP) formed by the GGPP synthase dpchD through the action of the prenyltransferase dpchC to yield a linear alpha-pyrone diterpenoid. Subsequent steps in the diterpenoid pyrone biosynthetic pathway involve the decalin core formation, which is initiated by the epoxidation of the C10-C11 olefin by the FAD-dependent oxidoreductase dpchE, and is followed by a cyclization cascade catalyzed by the terpene cyclase dpchB. The short chain dehydrogenase/reductase dpchG then oxidizes the 8S hydroxy group to a ketone and the short chain dehydrogenase/reductase dpchH reduces the ketone to the 8R hydroxy group to yield higginsianin B. Finally, the FAD-dependent oxidoreductase dpchF converts higginsianin B into higginsianin A. The chain is Short chain dehydrogenase/reductase dpchH from Colletotrichum higginsianum (strain IMI 349063) (Crucifer anthracnose fungus).